Here is a 485-residue protein sequence, read N- to C-terminus: Cysteine--tRNA ligase (485 aa).

C28 lines the Zn(2+) pocket. The short motif at 30 to 40 (MTVYDLCHVGH) is the 'HIGH' region element. The Zn(2+) site is built by C209, H234, and E238. The short motif at 266–270 (KMSKS) is the 'KMSKS' region element. K269 contributes to the ATP binding site.

This sequence belongs to the class-I aminoacyl-tRNA synthetase family. Monomer. It depends on Zn(2+) as a cofactor.

The protein resides in the cytoplasm. It carries out the reaction tRNA(Cys) + L-cysteine + ATP = L-cysteinyl-tRNA(Cys) + AMP + diphosphate. In Nitrosococcus oceani (strain ATCC 19707 / BCRC 17464 / JCM 30415 / NCIMB 11848 / C-107), this protein is Cysteine--tRNA ligase.